Here is a 364-residue protein sequence, read N- to C-terminus: O-methyltransferase 1 (364 aa).

S183, G207, D230, D250, and K264 together coordinate S-adenosyl-L-homocysteine. An S-adenosyl-L-methionine-binding site is contributed by D230. H268 functions as the Proton acceptor in the catalytic mechanism.

Belongs to the class I-like SAM-binding methyltransferase superfamily. Cation-independent O-methyltransferase family. As to quaternary structure, homodimer.

It carries out the reaction dopamine + S-adenosyl-L-methionine = 3-methoxytyramine + S-adenosyl-L-homocysteine + H(+). It catalyses the reaction 3,4-dihydroxy-5-methoxyphenethylamine + S-adenosyl-L-methionine = 4-hydroxy-3,5-dimethoxyphenethylamine + S-adenosyl-L-homocysteine + H(+). The protein operates within aromatic compound metabolism. It participates in alkaloid biosynthesis. Its function is as follows. O-methyltransferase participating in the biosynthesis of natural products derived from phenylethylamine, including mescaline, a natural hallucinogen potentially used in psychotherapeutic treatments. Catalyzes the O-methylation of mescaline meta hydroxyl groups, using dopamine and 3,4-dihydroxy-5-methoxyphenethylamine as substrates. The sequence is that of O-methyltransferase 1 from Lophophora williamsii (Peyote).